The sequence spans 504 residues: MSEIRTRIAPSPTGDPHVGTAYIALFNLCFARQHGGKFLLRIEDTDQTRSTPESEQAILDSLRWLGLEWDEGPDVGGPHGPYRQSERMDIYGKYALELVEKGHAFYCFATAEELDEMRREQQARGETPRYDGRGLTLTSAEVQSRLDAGEPYVIRMKIPEEGVCEIDDMLRGKIEIEWSQVDMQVLLKADGMPTYHLANVVDDHLMQITHVIRGEEWINSAPKHLKLYEYFGWRAPVLCHLPLLRNPDKSKLSKRKNPTSILYYKRMGYLPEAMLNYLGRMGWSMPDEREKFTLVEMQEHFDLLRVSLGGPIFDVEKLSWLNSLWIRENFTIEQLAQRLHDWALNKDMLLQALPHAQSRMTTLSDFAPLAGFLVSGMMPVTEASFASNKLPVEQQKEFLQFALWRLEALRTWERDTLFAELKTLAEQMGLKIKDAIAPVFVAIAGSTASFPVVDSMQIIGPDMSRARIRHAINALGGFGKNKQKDLEKVFAKLSEQGEEPAVNH.

The short motif at Pro10–Thr20 is the 'HIGH' region element. A 'KMSKS' region motif is present at residues Lys251–Arg255. Position 254 (Lys254) interacts with ATP.

Belongs to the class-I aminoacyl-tRNA synthetase family. Glutamate--tRNA ligase type 1 subfamily. As to quaternary structure, monomer.

Its subcellular location is the cytoplasm. The enzyme catalyses tRNA(Glu) + L-glutamate + ATP = L-glutamyl-tRNA(Glu) + AMP + diphosphate. In terms of biological role, catalyzes the attachment of glutamate to tRNA(Glu) in a two-step reaction: glutamate is first activated by ATP to form Glu-AMP and then transferred to the acceptor end of tRNA(Glu). The chain is Glutamate--tRNA ligase from Cellvibrio japonicus (strain Ueda107) (Pseudomonas fluorescens subsp. cellulosa).